The primary structure comprises 793 residues: Nuclear cap-binding protein subunit 1 (793 aa).

The MIF4G domain maps to Glu-28–Arg-242.

The protein belongs to the NCBP1 family. Component of the nuclear cap-binding complex (CBC), a heterodimer composed of ncbp-1 and ncbp-1 that interacts with m7GpppG-capped RNA.

The protein localises to the nucleus. Functionally, component of the cap-binding complex (CBC), which binds cotranscriptionally to the 5'-cap of pre-mRNAs and is involved in various processes such as pre-mRNA splicing and RNA-mediated gene silencing (RNAi). The CBC complex is involved in miRNA-mediated RNA interference and is required for primary microRNAs (miRNAs) processing. In the CBC complex, ncbp-1 does not bind directly capped RNAs (m7GpppG-capped RNA) but is required to stabilize the movement of the N-terminal loop of ncbp-2 and lock the CBC into a high affinity cap-binding state with the cap structure. In Caenorhabditis briggsae, this protein is Nuclear cap-binding protein subunit 1 (ncbp-1).